The chain runs to 156 residues: Ribosomal RNA large subunit methyltransferase H (156 aa).

S-adenosyl-L-methionine contacts are provided by residues L73, G104, and L123–L128.

It belongs to the RNA methyltransferase RlmH family. In terms of assembly, homodimer.

Its subcellular location is the cytoplasm. It carries out the reaction pseudouridine(1915) in 23S rRNA + S-adenosyl-L-methionine = N(3)-methylpseudouridine(1915) in 23S rRNA + S-adenosyl-L-homocysteine + H(+). In terms of biological role, specifically methylates the pseudouridine at position 1915 (m3Psi1915) in 23S rRNA. The sequence is that of Ribosomal RNA large subunit methyltransferase H from Colwellia psychrerythraea (strain 34H / ATCC BAA-681) (Vibrio psychroerythus).